Here is a 249-residue protein sequence, read N- to C-terminus: RING finger protein 223 (249 aa).

Residues 1–44 (MSSGQQVWHTAVPPPRRSSSIASMPRSPSSAGSPRSPGTPGSER) form a disordered region. Low complexity predominate over residues 17–44 (RSSSIASMPRSPSSAGSPRSPGTPGSER). The RING-type zinc-finger motif lies at 51–102 (CSICFSGYDNIFKTPKELSCTHVFCLECLARLAAAQPVGRPGGEAVPCPFCR). The helical transmembrane segment at 199-219 (LVSALLLMLFCVALWPVQCAL) threads the bilayer. A disordered region spans residues 230-249 (PPRPPATSTAASPLGPLTDN). The span at 235 to 249 (ATSTAASPLGPLTDN) shows a compositional bias: low complexity.

The protein localises to the membrane. In Homo sapiens (Human), this protein is RING finger protein 223 (RNF223).